The following is a 190-amino-acid chain: Segregation and condensation protein B (190 aa).

It belongs to the ScpB family. As to quaternary structure, homodimer. Homodimerization may be required to stabilize the binding of ScpA to the Smc head domains. Component of a cohesin-like complex composed of ScpA, ScpB and the Smc homodimer, in which ScpA and ScpB bind to the head domain of Smc. The presence of the three proteins is required for the association of the complex with DNA.

The protein resides in the cytoplasm. Participates in chromosomal partition during cell division. May act via the formation of a condensin-like complex containing Smc and ScpA that pull DNA away from mid-cell into both cell halves. The chain is Segregation and condensation protein B from Bacillus mycoides (strain KBAB4) (Bacillus weihenstephanensis).